The following is a 600-amino-acid chain: KIF-binding protein (600 aa).

Residues Lys-384–Leu-434 are a coiled coil.

This sequence belongs to the KIF-binding protein family.

The protein localises to the cytoplasm. It is found in the cytoskeleton. The sequence is that of KIF-binding protein from Drosophila melanogaster (Fruit fly).